A 331-amino-acid chain; its full sequence is Septin homolog spn2 (331 aa).

Positions Arg29–Ser301 constitute a Septin-type G domain. The segment at Gly39–Ser46 is G1 motif. Residues Gly39–Ser46, Thr73, Gly99, Lys179–Glu187, Gly235, and Arg250 contribute to the GTP site. A G3 motif region spans residues Asp96 to Gly99. The tract at residues Ala178 to Asp181 is G4 motif. Residues Arg311–Gln331 are disordered.

The protein belongs to the TRAFAC class TrmE-Era-EngA-EngB-Septin-like GTPase superfamily. Septin GTPase family. In terms of assembly, component of the septin complex composed of two copies of each spn1, spn2, spn3 and spn4. Component of the sporulation-specific septin complex composed of at least spn2, spn5, spn6 and spn7.

Its subcellular location is the cytoplasm. The protein localises to the cell cortex. The protein resides in the forespore membrane. Its function is as follows. Plays a role in the cell cycle. Involved in a late stage of septum formation leading to the separation of the daughter cells. Involved in the correct orientation of forespore membrane extension during sporulation. Binds phosphatidylinositol 4-phosphate. The protein is Septin homolog spn2 (spn2) of Schizosaccharomyces pombe (strain 972 / ATCC 24843) (Fission yeast).